The chain runs to 74 residues: uncharacterized protein (74 aa).

The stretch at L29 to L63 forms a coiled coil.

This is an uncharacterized protein from Pseudoalteromonas phage PM2 (Bacteriophage PM2).